The sequence spans 499 residues: Maturase K (499 aa).

It belongs to the intron maturase 2 family. MatK subfamily.

The protein localises to the plastid. It localises to the chloroplast. In terms of biological role, usually encoded in the trnK tRNA gene intron. Probably assists in splicing its own and other chloroplast group II introns. The polypeptide is Maturase K (Camellia sasanqua (Christmas camellia)).